A 227-amino-acid chain; its full sequence is MLIMKKLLLIAATSATMLSSSVSFAEGMDHEWYLRIDTGAAMFNEEKDKATGVKLKSNTTVPVALGIGYYISENFRADLTLGTIIGGKLKKSGAATNAPFTRTNISASHKPTITRLLINGYVDLTNFDMFDVFAGAGVGSALVKEKITYNGITGLSSNTKNRTNISYKLTLGTSAQIADGVKVELAYSWIDDGRTKSKNVIYQGTSVPTGGMHYQSHNLTAGIRFDI.

Residues 1-25 (MLIMKKLLLIAATSATMLSSSVSFA) form the signal peptide.

The protein to R.conorii RC1281.

This is an uncharacterized protein from Rickettsia conorii (strain ATCC VR-613 / Malish 7).